The following is a 137-amino-acid chain: Large ribosomal subunit protein uL16 (137 aa).

Belongs to the universal ribosomal protein uL16 family. In terms of assembly, part of the 50S ribosomal subunit.

Binds 23S rRNA and is also seen to make contacts with the A and possibly P site tRNAs. This chain is Large ribosomal subunit protein uL16, found in Rhodopseudomonas palustris (strain ATCC BAA-98 / CGA009).